A 343-amino-acid polypeptide reads, in one-letter code: MIREWENGCPKIGKQRARDSRAQERMTTEGKLNKNGIPARVFNISDSFLNKESLSSQGDVCPASPLGIWTKFYKSDPRIALGKYSPLEKEILRLGGVHTVAARRFLTYKQEEERKMLKELQTLSADYKRVVDCRRQHTSPCATCGSLGKMWTAKVIVSPEEFRMPRRERLNVSKHIERMQLARALRSKQLLPYIERFRGSSLLPSGGLGPMARARAGEGQDDGNTDDGNDVHQKGRGEVESKTSKRQEIKMNVIFKSEEPQKCITSHPNDLKPFFPAKKAERSITGLTNRSLLHVSEFPGDLMLMNQDFLSRGIYPSYASQATRLEEENAWKEYMCKVAPHHY.

2 disordered regions span residues 1-27 and 205-247; these read MIREWENGCPKIGKQRARDSRAQERMT and SGGL…SKRQ. Positions 16 to 27 are enriched in basic and acidic residues; it reads RARDSRAQERMT. Over residues 219 to 228 the composition is skewed to acidic residues; it reads GQDDGNTDDG. Residues 229–247 are compositionally biased toward basic and acidic residues; the sequence is NDVHQKGRGEVESKTSKRQ.

Dispensable for normal development and fertility. This is an uncharacterized protein from Bos taurus (Bovine).